Consider the following 473-residue polypeptide: Trigger factor (473 aa).

The 86-residue stretch at 171-256 (GDRVTIDFVG…VTKIQAAGEA (86 aa)) folds into the PPIase FKBP-type domain. The disordered stretch occupies residues 439–473 (KEALFADEDGDDTTGGKPADKAEAKDESKTEAKAD). Residues 456–473 (PADKAEAKDESKTEAKAD) are compositionally biased toward basic and acidic residues.

This sequence belongs to the FKBP-type PPIase family. Tig subfamily.

It is found in the cytoplasm. The enzyme catalyses [protein]-peptidylproline (omega=180) = [protein]-peptidylproline (omega=0). Its function is as follows. Involved in protein export. Acts as a chaperone by maintaining the newly synthesized protein in an open conformation. Functions as a peptidyl-prolyl cis-trans isomerase. This is Trigger factor from Methylobacterium radiotolerans (strain ATCC 27329 / DSM 1819 / JCM 2831 / NBRC 15690 / NCIMB 10815 / 0-1).